The following is a 323-amino-acid chain: Mitochondrial glutamate carrier 1 (323 aa).

Solcar repeat units follow at residues 6-93, 101-214, and 223-312; these read ISLP…FRHQ, LTLP…LNQL, and SPFY…GIAE. The next 6 helical transmembrane spans lie at 12–32, 62–82, 107–127, 189–209, 223–243, and 292–312; these read LING…IDLA, YFGM…EKAI, MLAG…MEML, GLGA…PLFA, SPFY…AVAV, and ALVI…GIAE.

It belongs to the mitochondrial carrier (TC 2.A.29) family.

It localises to the mitochondrion inner membrane. It carries out the reaction L-glutamate(in) + H(+)(in) = L-glutamate(out) + H(+)(out). Mitochondrial glutamate/H(+) symporter. Responsible for the transport of glutamate from the cytosol into the mitochondrial matrix with the concomitant import of a proton. Plays a role in the control of glucose-stimulated insulin secretion. The sequence is that of Mitochondrial glutamate carrier 1 (Slc25a22) from Mus musculus (Mouse).